A 173-amino-acid chain; its full sequence is Crossover junction endodeoxyribonuclease RuvC (173 aa).

Residues Asp-8, Glu-67, and Asp-139 contribute to the active site. Residues Asp-8, Glu-67, and Asp-139 each coordinate Mg(2+).

Belongs to the RuvC family. In terms of assembly, homodimer which binds Holliday junction (HJ) DNA. The HJ becomes 2-fold symmetrical on binding to RuvC with unstacked arms; it has a different conformation from HJ DNA in complex with RuvA. In the full resolvosome a probable DNA-RuvA(4)-RuvB(12)-RuvC(2) complex forms which resolves the HJ. Mg(2+) serves as cofactor.

The protein resides in the cytoplasm. The enzyme catalyses Endonucleolytic cleavage at a junction such as a reciprocal single-stranded crossover between two homologous DNA duplexes (Holliday junction).. Functionally, the RuvA-RuvB-RuvC complex processes Holliday junction (HJ) DNA during genetic recombination and DNA repair. Endonuclease that resolves HJ intermediates. Cleaves cruciform DNA by making single-stranded nicks across the HJ at symmetrical positions within the homologous arms, yielding a 5'-phosphate and a 3'-hydroxyl group; requires a central core of homology in the junction. The consensus cleavage sequence is 5'-(A/T)TT(C/G)-3'. Cleavage occurs on the 3'-side of the TT dinucleotide at the point of strand exchange. HJ branch migration catalyzed by RuvA-RuvB allows RuvC to scan DNA until it finds its consensus sequence, where it cleaves and resolves the cruciform DNA. The protein is Crossover junction endodeoxyribonuclease RuvC of Shewanella woodyi (strain ATCC 51908 / MS32).